A 167-amino-acid chain; its full sequence is UPF0336 protein MAP_4109 (167 aa).

The MaoC-like domain occupies 21–124 (GREQLRQFAL…RFGADIVVTK (104 aa)).

It belongs to the UPF0336 family.

The polypeptide is UPF0336 protein MAP_4109 (Mycolicibacterium paratuberculosis (strain ATCC BAA-968 / K-10) (Mycobacterium paratuberculosis)).